We begin with the raw amino-acid sequence, 38 residues long: Large ribosomal subunit protein bL36 (38 aa).

It belongs to the bacterial ribosomal protein bL36 family.

The sequence is that of Large ribosomal subunit protein bL36 from Amoebophilus asiaticus (strain 5a2).